The sequence spans 206 residues: MDRLLVLVRHGQSEWNLQNLFTGWKDPDLTDLGVSEAKAAGRALKTAGVGFDIGFTSDLLRAQRTMKLLLAEFGQPDLQVTKNVSLNERDYGDLSGLNKAEAAQQWGDEQVHLWRRSYDVPPPGGESLKDTVARVLPYYCQEILPAVLNGKRTLVTAHGNSLRALIMVLDKLTPKTIPGMELATGVPIVYRLKADSTVESKQVLEP.

Substrate-binding positions include 9 to 16 (RHGQSEWN), 22 to 23 (TG), Arg-61, 88 to 91 (ERDY), Lys-99, 115 to 116 (RR), and 159 to 160 (GN). The Tele-phosphohistidine intermediate role is filled by His-10. Glu-88 acts as the Proton donor/acceptor in catalysis.

It belongs to the phosphoglycerate mutase family. BPG-dependent PGAM subfamily. As to quaternary structure, homodimer.

The catalysed reaction is (2R)-2-phosphoglycerate = (2R)-3-phosphoglycerate. It functions in the pathway carbohydrate degradation; glycolysis; pyruvate from D-glyceraldehyde 3-phosphate: step 3/5. Catalyzes the interconversion of 2-phosphoglycerate and 3-phosphoglycerate. This is 2,3-bisphosphoglycerate-dependent phosphoglycerate mutase from Methylocella silvestris (strain DSM 15510 / CIP 108128 / LMG 27833 / NCIMB 13906 / BL2).